The sequence spans 188 residues: Deoxyuridine 5'-triphosphate nucleotidohydrolase (188 aa).

The interval 1-34 (MGEMTSGVDGHGSTKRTTSEAQKMDFNTDRGSAI) is disordered.

The protein belongs to the dUTPase family. The cofactor is Mg(2+).

It carries out the reaction dUTP + H2O = dUMP + diphosphate + H(+). Functionally, this enzyme is involved in nucleotide metabolism: it produces dUMP, the immediate precursor of thymidine nucleotides and it decreases the intracellular concentration of dUTP so that uracil cannot be incorporated into DNA. This is Deoxyuridine 5'-triphosphate nucleotidohydrolase (49) from Ictaluridae (bullhead catfishes).